The primary structure comprises 2890 residues: MSKKIPLKNRLRADFTKTPTDLEVPNLLLLQRDSYDSFLYSKDGKESGIEKVFKSIFPIQDEHNRITLEYAGCEFGKSKYTVREAMERGITYSIPLKIKVRLILWEKDTKSGEKNGIKDIKEQSIFIREIPLMTERTSFIINGVERVVVNQLYRSPGVIFKEEESSTSSNKLIYTGQIIPDRGSWLYFEYDSKDVLYARINKRRKVPVTILFRAMDYQKQDIIKMFYPLVKVRYENDKYLIPFASLDANQRMEFDLKDPQGKIILLAGKKLTSRKIKELKENHLEWVEYPMDILLNRHLAEPVMVGKEVLLDMLTQLDKNRLEKIHDLGVQEFVIINDLALGHDASIIHSFSADHESLKLLKQTEKIDDENALAAIRIHKVMKPGDPVTTEVAKQFVKKLFFDPERYDLTMVGRMKMNHKLGLHVPDYITTLTHEDIITTVKYLMKIKNNQGKIDDRDHLGNRRIRAVGELLANELHSGLVKMQKTIKDKLTTMSGAFDSLMPHDLVNSKMITSTIMEFFMGGQLSQFMDQTNPLSEVTHKRRLSALGEGGLVKDRVGFEARDVHPTYYGQFGPIETPEGQNIGLINTLSTFTRVNDLGFIEAPYKKVVDGKVAGETIYLTAIQEDSHIIAPASTPIDEEGNILGDLIETRVEGEIVLNEKSKVTLMDLSSSMLVGVAASLIPFLEHDDANRALMGTNMQRQAVPLLRSDAPIVGTGIEKIIARDSWGAIKANRAGVVEKIDSKNIYILGEGKEEAYIDAYSLQKNLRTNQNTSFNQVPIVKVGDKVEAGQIIADGPSMDRGELALGKNVRVAFMPWNGYNFEDAIVVSERITKDDVFTSTHIYEKEVDARELKHGVEEFTADIPDVKEEALAHLDESGIVKVGTYVSAGMILVGKTSPKGEIKSTPEERLLRAIFGDKAGHVVNKSLYCPPSLEGTVIDVKVFTKKGYEKDARVLSAYEEEKAKLDMEHFDRLTMLNREELLRVSSLLSQAILEEPFSHNGKDYKEGDQIPKEEIASINRFTLASLVKKYSKEVQNHYEITKNNFLEQKKVLGEEHEEKLSILEKDDILPNGVIKKVKLYIATKRKLKVGDKMAGRHGNKGIVSNIVPVADMPYTADGEPVDIVLNPLGVPSRMNIGQILEMHLGLVGKEFGKQIASMLEDKTKDFAKELRAKMLEIANAINEKDPLTIHVLENCSDEELLEYAKDWSKGVKMAIPVFEGISQEKFYKLFELAKIAMDGKMDLYDGRTGEKMRERVNVGYMYMIKLHHLVDEKVHARSTGPYSLVTHQPVGGKALFGGQRFGEMEVWALEAYGAAHTLKEMLTIKSDDIRGRENAYRAIAKGEQVGESEIPETFYVLTKELQSLALDINIFGDDVDEDGAPRPIMIKEDDRPKDFSSFQLTLASPEKIHSWSYGEVKKPETINYRTLKPERDGLFCMKIFGPTKDYECLCGKYKKPRFKDIGTCEKCGVAITHSKVRRFRMGHIELATPVAHIWYVNSLPSRIGTLLGVKMKDLERVLYYEAYIVKEPGEAAYDNEGTKLVMKYDILNEEQYQNISRRYEDRGFVAQMGGEAIKDLLEEIDLITLLQSLKEEVKDTNSDAKKKKLIKRLKVVESFLNSGNRPEWMMLTVLPVLPPDLRPLVALDGGKFAVSDVNELYRRVINRNQRLKRLMELGAPEIIVRNEKRMLQEAVDVLFDNGRSTNAVKGANKRPLKSLSEIIKGKQGRFRQNLLGKRVDFSGRSVIVVGPNLKMDECGLPKNMALELFKPHLLSKLEERGYATTLKQAKRMIEQKSNEVWECLQEITEGYPVLLNRAPTLHKQSIQAFHPKLIDGKAIQLHPLVCSAFNADFDGDQMAVHVPLSQEAIAECKVLMLSSMNILLPASGKAVAIPSQDMVLGLYYLSLEKSGVKGEHKLFSSVNEIITAIDTKELDIHAKIRVLDQGNIIATSAGRMIIKSILPDFIPTDLWNRPMKKKDIGVLVDYVHKVGGIGITATFLDHLKTLGFRYATKAGISISMEDIITPKDKQKMVEKAKVEVKKIQQQYDQGLLTDQERYNKIIDTWTEVNDRMSKEMMSAIAKDKEGFNSIYMMADSGARGSAAQIRQLSAMRGLMTKPDGSIIETPIISNFKEGLNVLEYFNSTHGARKGLADTALKTANAGYLTRKLIDVSQNVKVVSDDCGTHEGIEITDIAVGSELIEPLEERIFGRVLLEDVIDPITNEILLYADTLIDEEGAKKVVEAGIKSITIRTPVTCKAPKGVCAKCYGLNLGEGKMSYPGEAVGVVAAQSIGEPGTQLTLRTFHVGGTASRSQDEREIVASKEGFVRFYNLRTYTNKEGKNIIANRRNASILVVEPKIKAPFDGELRIETVYEEVVVSVKNGDQEAKFVLRRSDIVKPSELAGVGGKIEGKVYLPYASGHKVHKGGSIADIIQEGWNVPNRIPYASELLVKDNDPIAQDVYAKEKGVIKYYVLEANHLERTHGVKKGDIVSEKGLFAVVADDNGREAARHYIARGSEILIDDNSEVSANSVISKPTTNTFKTIATWDPYNTPIIADFKGKVNFVDVIAGVTVAEKEDENTGITSLVVNDYIPSGYKPSLFLEGANGEEMRYFLEPKTSIAISDGSSVEQAEVLAKIPKATVKSRDITGGLPRVSELFEARKPKPKDVAILSEVDGIVSFGKPIRNKEHIIVTSKDGRLTDYFVDKGKQILVHADEFVHAGEAMTDGVVSSHDILRISGEKELYKYIVSEVQQVYRRQGVSIADKHIEIIVSQMLRQVRILDSGDSKFIEGDLVSKKLFKEENTRVIALKGEPAIAEPVLLGITRAAIGSDSIISAASFQETTKVLTEASIAMKKDFLEDLKENVVLGRMIPVGTGMYKNKKIVLRALEDNSKF.

The DNA-directed RNA polymerase subunit beta stretch occupies residues 1 to 1377 (MSKKIPLKNR…DINIFGDDVD (1377 aa)). The interval 1384–2890 (PIMIKEDDRP…LRALEDNSKF (1507 aa)) is DNA-directed RNA polymerase subunit beta'. Residues cysteine 1449, cysteine 1451, cysteine 1465, and cysteine 1468 each coordinate Zn(2+). Residues aspartate 1849, aspartate 1851, and aspartate 1853 each coordinate Mg(2+). Cysteine 2179, cysteine 2253, cysteine 2260, and cysteine 2263 together coordinate Zn(2+).

This sequence in the N-terminal section; belongs to the RNA polymerase beta chain family. It in the C-terminal section; belongs to the RNA polymerase beta' chain family. In terms of assembly, the RNAP catalytic core consists of 2 alpha, 1 beta/beta' and 1 omega subunit. When a sigma factor is associated with the core the holoenzyme is formed, which can initiate transcription. Requires Mg(2+) as cofactor. Zn(2+) serves as cofactor.

It carries out the reaction RNA(n) + a ribonucleoside 5'-triphosphate = RNA(n+1) + diphosphate. In terms of biological role, DNA-dependent RNA polymerase catalyzes the transcription of DNA into RNA using the four ribonucleoside triphosphates as substrates. This Helicobacter pylori (strain J99 / ATCC 700824) (Campylobacter pylori J99) protein is Bifunctional DNA-directed RNA polymerase subunit beta-beta' (rpoBC).